The primary structure comprises 181 residues: 3-hexulose-6-phosphate isomerase (181 aa).

An SIS domain is found at 27–168 (ILSLVDAAGR…IAKLVDQKGL (142 aa)). Substrate contacts are provided by residues Ser-45 and 84-89 (SGSGST). Catalysis depends on Glu-148, which acts as the Proton acceptor.

This sequence belongs to the SIS family. PHI subfamily. In terms of assembly, homodimer.

It catalyses the reaction D-arabino-hex-3-ulose 6-phosphate = beta-D-fructose 6-phosphate. Its pathway is one-carbon metabolism; formaldehyde assimilation via RuMP pathway; D-fructose 6-phosphate from D-ribulose 5-phosphate and formaldehyde: step 2/2. Its function is as follows. Catalyzes the isomerization between 3-hexulose 6-phosphate and fructose 6-phosphate. The polypeptide is 3-hexulose-6-phosphate isomerase (rmpB) (Methylomonas aminofaciens).